Reading from the N-terminus, the 88-residue chain is Large ribosomal subunit protein bL27 (88 aa).

Residues 1–24 (MAHKKGTGSTRNGRDSNAKRLGVK) are disordered.

This sequence belongs to the bacterial ribosomal protein bL27 family.

The sequence is that of Large ribosomal subunit protein bL27 from Synechococcus sp. (strain CC9605).